A 358-amino-acid polypeptide reads, in one-letter code: MKLTVTLPTHSYDLTIETGALDKIGTWVRSLWQPQRVAIITDETVNKLYGAAVEKELQAAGFETSLIAVAAGEQSKSLEIAQLLYDFLAEQQLTRSDGLIALGGGVVGDLAGFVASTYMRGIHFLQVPTTLLAQVDSSIGGKTAVNTKKAKNLVGTFAQPDGVLIDPNTLKTLEPRRVREGIAEIVKSAAIADVELWHRLSSLENEQDLVAHAEEIITACCKIKRDVVEEDELDLGLRLILNFGHTIGHALENTAGYGVIAHGEGVSLGMIQITQVAEQQGLSPLGTTQELVTMLEKFHLPVTTDRWSEERLYQAITHDKKTRGGQIKIIVLEKIGQAKIVSLPTEEIRAFLNREGGI.

Residues 105–109, 129–130, Lys142, Lys151, and 169–172 each bind NAD(+); these read GVVGD, TT, and TLKT. Zn(2+) is bound by residues Glu184, His245, and His262.

It belongs to the sugar phosphate cyclases superfamily. Dehydroquinate synthase family. Requires NAD(+) as cofactor. The cofactor is Co(2+). Zn(2+) serves as cofactor.

The protein resides in the cytoplasm. It carries out the reaction 7-phospho-2-dehydro-3-deoxy-D-arabino-heptonate = 3-dehydroquinate + phosphate. Its pathway is metabolic intermediate biosynthesis; chorismate biosynthesis; chorismate from D-erythrose 4-phosphate and phosphoenolpyruvate: step 2/7. Catalyzes the conversion of 3-deoxy-D-arabino-heptulosonate 7-phosphate (DAHP) to dehydroquinate (DHQ). In Enterococcus faecalis (strain ATCC 700802 / V583), this protein is 3-dehydroquinate synthase.